A 451-amino-acid polypeptide reads, in one-letter code: TERF1-interacting nuclear factor 2 (451 aa).

Alanine 2 carries the post-translational modification N-acetylalanine. The tract at residues 229-257 (NPLPKAKPGTHLPQGPSSRTHPEPLAGRH) is disordered. Residues 256–278 (RHFNLAPLGRRRVQSQWASTRGG) carry the TBM motif. Residues 262–268 (PLGRRRV) carry the Nuclear localization signal motif. Position 295 is a phosphoserine (serine 295). Glycyl lysine isopeptide (Lys-Gly) (interchain with G-Cter in SUMO2) cross-links involve residues lysine 302, lysine 306, lysine 341, and lysine 353.

Monomer. Found in a complex with POT1; TERF1 and TNKS1. Component of the shelterin complex (telosome) composed of TERF1, TERF2, TINF2, TERF2IP ACD and POT1. Interacts with TERF1, TERF2 and ACD. Detected in heart, brain, placenta, lung, liver, skeletal muscle, kidney and pancreas.

Its subcellular location is the nucleus. The protein localises to the chromosome. It is found in the telomere. The protein resides in the nucleus matrix. Functionally, component of the shelterin complex (telosome) that is involved in the regulation of telomere length and protection. Shelterin associates with arrays of double-stranded TTAGGG repeats added by telomerase and protects chromosome ends; without its protective activity, telomeres are no longer hidden from the DNA damage surveillance and chromosome ends are inappropriately processed by DNA repair pathways. Plays a role in shelterin complex assembly. Isoform 1 may have additional role in tethering telomeres to the nuclear matrix. This is TERF1-interacting nuclear factor 2 (TINF2) from Homo sapiens (Human).